Consider the following 200-residue polypeptide: Probable GTP-binding protein EngB (200 aa).

Residues 26 to 200 form the EngB-type G domain; the sequence is SIPEIAIAGR…IYEIAQCIKK (175 aa). GTP-binding positions include 34–41, 61–65, 80–83, 147–150, and 176–179; these read GRSNVGKS, GCTKQ, DLPG, TKID, and VISA. Ser41 and Thr63 together coordinate Mg(2+).

This sequence belongs to the TRAFAC class TrmE-Era-EngA-EngB-Septin-like GTPase superfamily. EngB GTPase family. Mg(2+) serves as cofactor.

In terms of biological role, necessary for normal cell division and for the maintenance of normal septation. The chain is Probable GTP-binding protein EngB from Ehrlichia canis (strain Jake).